We begin with the raw amino-acid sequence, 179 residues long: Translation initiation factor IF-3 (179 aa).

The protein belongs to the IF-3 family. As to quaternary structure, monomer.

It localises to the cytoplasm. Its function is as follows. IF-3 binds to the 30S ribosomal subunit and shifts the equilibrium between 70S ribosomes and their 50S and 30S subunits in favor of the free subunits, thus enhancing the availability of 30S subunits on which protein synthesis initiation begins. The polypeptide is Translation initiation factor IF-3 (Proteus hauseri).